The following is a 398-amino-acid chain: ATP-dependent RNA helicase eIF4A (398 aa).

The Q motif motif lies at 25–53 (DSFDSMDLKPELLRGIYAYGFERPSAIQQ). One can recognise a Helicase ATP-binding domain in the interval 56–226 (IMPIIKGSDV…TKFMRDPVRI (171 aa)). An ATP-binding site is contributed by 69 to 76 (AQSGTGKT). Positions 174 to 177 (DEAD) match the DEAD box motif. The 162-residue stretch at 237 to 398 (GIKQFYIAVE…EMPMNVADLI (162 aa)) folds into the Helicase C-terminal domain.

Belongs to the DEAD box helicase family. eIF4A subfamily. As to quaternary structure, component of the eIF4F complex, which composition varies with external and internal environmental conditions. It is composed of at least eIF4A, eIF4E and eIF4G.

Its subcellular location is the cytoplasm. It catalyses the reaction ATP + H2O = ADP + phosphate + H(+). In terms of biological role, ATP-dependent RNA helicase which is a subunit of the eIF4F complex involved in cap recognition and is required for mRNA binding to ribosome. In the current model of translation initiation, eIF4A unwinds RNA secondary structures in the 5'-UTR of mRNAs which is necessary to allow efficient binding of the small ribosomal subunit, and subsequent scanning for the initiator codon. The sequence is that of ATP-dependent RNA helicase eIF4A (tif1) from Aspergillus clavatus (strain ATCC 1007 / CBS 513.65 / DSM 816 / NCTC 3887 / NRRL 1 / QM 1276 / 107).